Consider the following 228-residue polypeptide: CMRF-35-like molecule 4 (228 aa).

Positions 1 to 24 (MIPRVIRLWLPSALFLSQVPGCVP) are cleaved as a signal peptide. The Ig-like V-type domain maps to 25-126 (LHGPSTITGA…FDGSLGFDKY (102 aa)). Topologically, residues 25–187 (LHGPSTITGA…QPRSLRSSLY (163 aa)) are extracellular. A disulfide bond links Cys-43 and Cys-110. Asn-90 is a glycosylation site (N-linked (GlcNAc...) asparagine). The segment at 139–174 (PVTGSSLESGRDILESPTSSVGHTHPSVTTDDTIPA) is disordered. Over residues 154–170 (SPTSSVGHTHPSVTTDD) the composition is skewed to polar residues. The chain crosses the membrane as a helical span at residues 188 to 208 (FWVLVSLKLFLFLSMLGAVLW). Over 209 to 228 (VNRPQRCSGGSSSRPCYENQ) the chain is Cytoplasmic.

Belongs to the CD300 family. As to quaternary structure, interacts with TYROBP, HCST and FcR gamma. Present on the surface of mast cells, dendritic cells, peritoneal macrophages and a subset of B-cells (at protein level).

The protein resides in the cell membrane. In terms of biological role, acts as an activating receptor in mast cells and macrophages. The polypeptide is CMRF-35-like molecule 4 (Mus musculus (Mouse)).